Here is a 249-residue protein sequence, read N- to C-terminus: Vitamin B12 import ATP-binding protein BtuD (249 aa).

The 233-residue stretch at 1–233 folds into the ABC transporter domain; the sequence is MSIVMQLQDV…PNLAQAYGMN (233 aa). 33-40 is a binding site for ATP; that stretch reads GPNGAGKS.

The protein belongs to the ABC transporter superfamily. Vitamin B12 importer (TC 3.A.1.13.1) family. In terms of assembly, the complex is composed of two ATP-binding proteins (BtuD), two transmembrane proteins (BtuC) and a solute-binding protein (BtuF).

Its subcellular location is the cell inner membrane. It catalyses the reaction an R-cob(III)alamin(out) + ATP + H2O = an R-cob(III)alamin(in) + ADP + phosphate + H(+). Functionally, part of the ABC transporter complex BtuCDF involved in vitamin B12 import. Responsible for energy coupling to the transport system. The sequence is that of Vitamin B12 import ATP-binding protein BtuD from Escherichia coli (strain K12 / DH10B).